The sequence spans 405 residues: Potassium channel subfamily K member 13 (405 aa).

Topologically, residues 1-19 (MAGRGCGCSPGHLNEDNAR) are cytoplasmic. Residues 20–40 (FLLLAGLILLYLLGGAAVFSA) form a helical membrane-spanning segment. N-linked (GlcNAc...) asparagine glycans are attached at residues N59 and N65. Residues 95–115 (WDFTGAFYFVGTVVSTIGFGM) constitute an intramembrane region (pore-forming). Residues T110, I111, and G112 each coordinate K(+). The tract at residues 110–115 (TIGFGM) is selectivity filter 1. A helical transmembrane segment spans residues 125–145 (IFLIFYGLIGCASTILFFNLF). Residues 146–193 (LERLITVIACVMRSCHQQQLRRRGAVTQDNMKAPEKGEADSLTGWKPS) lie on the Cytoplasmic side of the membrane. Residues 194–214 (VYYVMLILCLASVAISCGASA) traverse the membrane as a helical segment. The pore-forming intramembrane region spans 224-244 (YFDSVYFCFVAFSTIGFGDLV). K(+)-binding residues include T237, I238, G239, and F240. The tract at residues 237 to 242 (TIGFGD) is selectivity filter 2. Residues 263–283 (FLILMGVCCIYSLFNVISILI) form a helical membrane-spanning segment. At 284–405 (KQTVNWILRK…NRLAETSGDR (122 aa)) the chain is on the cytoplasmic side.

The protein belongs to the two pore domain potassium channel (TC 1.A.1.8) family. In terms of assembly, homodimer. Heterodimer with KCNK12.

It localises to the cell membrane. It carries out the reaction K(+)(in) = K(+)(out). Its function is as follows. K(+) channel that conducts outward rectifying tonic currents potentiated by purinergic signals. Homo- and heterodimerizes to form functional channels with distinct regulatory and gating properties. Contributes most of K(+) currents at the plasma membrane of resting microglia. Maintains a depolarized membrane potential required for proper ramified microglia morphology and phagocytosis, selectively mediating microglial pruning of presynaptic compartments at hippocampal excitatory synapses. Upon local release of ATP caused by neuronal injury or infection, it is potentiated by P2RY12 and P2RX7 receptor signaling and contributes to ATP-triggered K(+) efflux underlying microglial NLRP3 inflammasome assembly and IL1B release. In Mus musculus (Mouse), this protein is Potassium channel subfamily K member 13.